The sequence spans 279 residues: Tryptophan synthase alpha chain (279 aa).

Residues Glu50 and Asp61 each act as proton acceptor in the active site.

This sequence belongs to the TrpA family. Tetramer of two alpha and two beta chains.

The catalysed reaction is (1S,2R)-1-C-(indol-3-yl)glycerol 3-phosphate + L-serine = D-glyceraldehyde 3-phosphate + L-tryptophan + H2O. It participates in amino-acid biosynthesis; L-tryptophan biosynthesis; L-tryptophan from chorismate: step 5/5. Its function is as follows. The alpha subunit is responsible for the aldol cleavage of indoleglycerol phosphate to indole and glyceraldehyde 3-phosphate. The sequence is that of Tryptophan synthase alpha chain from Azorhizobium caulinodans (strain ATCC 43989 / DSM 5975 / JCM 20966 / LMG 6465 / NBRC 14845 / NCIMB 13405 / ORS 571).